The sequence spans 138 residues: Phosphoribosyl-AMP cyclohydrolase (138 aa).

D84 provides a ligand contact to Mg(2+). C85 serves as a coordination point for Zn(2+). Mg(2+) is bound by residues D86 and D88. Zn(2+) is bound by residues C102 and C109.

Belongs to the PRA-CH family. In terms of assembly, homodimer. Mg(2+) is required as a cofactor. Requires Zn(2+) as cofactor.

It localises to the cytoplasm. It carries out the reaction 1-(5-phospho-beta-D-ribosyl)-5'-AMP + H2O = 1-(5-phospho-beta-D-ribosyl)-5-[(5-phospho-beta-D-ribosylamino)methylideneamino]imidazole-4-carboxamide. The protein operates within amino-acid biosynthesis; L-histidine biosynthesis; L-histidine from 5-phospho-alpha-D-ribose 1-diphosphate: step 3/9. Its function is as follows. Catalyzes the hydrolysis of the adenine ring of phosphoribosyl-AMP. The chain is Phosphoribosyl-AMP cyclohydrolase from Burkholderia vietnamiensis (strain G4 / LMG 22486) (Burkholderia cepacia (strain R1808)).